A 172-amino-acid chain; its full sequence is Transcriptional repressor NrdR (172 aa).

A zinc finger spans residues C3–C34. The region spanning T49–D139 is the ATP-cone domain.

Belongs to the NrdR family. Requires Zn(2+) as cofactor.

Its function is as follows. Negatively regulates transcription of bacterial ribonucleotide reductase nrd genes and operons by binding to NrdR-boxes. This Gloeobacter violaceus (strain ATCC 29082 / PCC 7421) protein is Transcriptional repressor NrdR.